Reading from the N-terminus, the 411-residue chain is Heterogeneous nuclear ribonucleoprotein 1 (411 aa).

The 77-residue stretch at 6–82 (GKLFVGGISW…REVDVKRAMS (77 aa)) folds into the RRM 1 domain. Disordered regions lie at residues 81 to 103 (MSRE…SSGG), 183 to 221 (KRAL…DGRM), and 358 to 411 (AAYG…RQGQ). A compositionally biased stretch (polar residues) spans 87 to 101 (QVSGRTGNLNTSRSS). One can recognise an RRM 2 domain in the interval 110 to 187 (KKIFVGGLPP…KQVEVKRALP (78 aa)). 3 stretches are compositionally biased toward gly residues: residues 192–212 (PGGG…GYGG), 362–387 (VVGG…GYGD), and 397–411 (GYGG…RQGQ). Residues 341–390 (GYGYGGYSGSDSGYGNQAAYGVVGGRPSGGGSNNPGSGGYMGGGYGDGSW) form a nuclear targeting sequence (M9) region.

In terms of assembly, component of the spliceosome. Interacts with TRN1.

Its subcellular location is the nucleus. The protein resides in the cytoplasm. Functionally, involved with pre-mRNA processing. Forms complexes (ribonucleosomes) with at least 20 other different hnRNP and heterogeneous nuclear RNA in the nucleus. In terms of biological role, involved in the packaging of pre-mRNA into hnRNP particles, transport of poly(A) mRNA from the nucleus to the cytoplasm and may modulate splice site selection. This chain is Heterogeneous nuclear ribonucleoprotein 1 (RNP1), found in Arabidopsis thaliana (Mouse-ear cress).